The following is a 455-amino-acid chain: ATP-dependent protease ATPase subunit HslU (455 aa).

Residues valine 23, 65–70 (GVGKTE), aspartate 266, glutamate 333, and arginine 405 each bind ATP.

The protein belongs to the ClpX chaperone family. HslU subfamily. In terms of assembly, a double ring-shaped homohexamer of HslV is capped on each side by a ring-shaped HslU homohexamer. The assembly of the HslU/HslV complex is dependent on binding of ATP.

The protein localises to the cytoplasm. ATPase subunit of a proteasome-like degradation complex; this subunit has chaperone activity. The binding of ATP and its subsequent hydrolysis by HslU are essential for unfolding of protein substrates subsequently hydrolyzed by HslV. HslU recognizes the N-terminal part of its protein substrates and unfolds these before they are guided to HslV for hydrolysis. This is ATP-dependent protease ATPase subunit HslU from Xanthomonas axonopodis pv. citri (strain 306).